A 190-amino-acid chain; its full sequence is Peptidyl-tRNA hydrolase (190 aa).

F14 is a binding site for tRNA. Residue H19 is the Proton acceptor of the active site. M64, N66, and N112 together coordinate tRNA.

This sequence belongs to the PTH family. Monomer.

The protein localises to the cytoplasm. The enzyme catalyses an N-acyl-L-alpha-aminoacyl-tRNA + H2O = an N-acyl-L-amino acid + a tRNA + H(+). Functionally, hydrolyzes ribosome-free peptidyl-tRNAs (with 1 or more amino acids incorporated), which drop off the ribosome during protein synthesis, or as a result of ribosome stalling. Its function is as follows. Catalyzes the release of premature peptidyl moieties from peptidyl-tRNA molecules trapped in stalled 50S ribosomal subunits, and thus maintains levels of free tRNAs and 50S ribosomes. This chain is Peptidyl-tRNA hydrolase, found in Staphylococcus saprophyticus subsp. saprophyticus (strain ATCC 15305 / DSM 20229 / NCIMB 8711 / NCTC 7292 / S-41).